Consider the following 469-residue polypeptide: Glutamate--tRNA ligase (469 aa).

The 'HIGH' region signature appears at 9 to 19 (PSPTGFLHVGG). Zn(2+)-binding residues include Cys98, Cys100, Cys125, and Asp127. The 'KMSKS' region signature appears at 236-240 (KLSKR). Residue Lys239 participates in ATP binding.

It belongs to the class-I aminoacyl-tRNA synthetase family. Glutamate--tRNA ligase type 1 subfamily. Monomer. Zn(2+) is required as a cofactor.

The protein localises to the cytoplasm. The enzyme catalyses tRNA(Glu) + L-glutamate + ATP = L-glutamyl-tRNA(Glu) + AMP + diphosphate. Catalyzes the attachment of glutamate to tRNA(Glu) in a two-step reaction: glutamate is first activated by ATP to form Glu-AMP and then transferred to the acceptor end of tRNA(Glu). This Shewanella loihica (strain ATCC BAA-1088 / PV-4) protein is Glutamate--tRNA ligase.